An 80-amino-acid polypeptide reads, in one-letter code: Large ribosomal subunit protein bL31B (80 aa).

Belongs to the bacterial ribosomal protein bL31 family. Type B subfamily. As to quaternary structure, part of the 50S ribosomal subunit.

The protein is Large ribosomal subunit protein bL31B of Streptococcus mutans serotype c (strain ATCC 700610 / UA159).